The following is a 674-amino-acid chain: DNA ligase (674 aa).

NAD(+) contacts are provided by residues 34–38, 82–83, and glutamate 107; these read DADFD and SL. Lysine 109 functions as the N6-AMP-lysine intermediate in the catalytic mechanism. NAD(+)-binding residues include arginine 130, glutamate 170, lysine 286, and lysine 310. Positions 404, 407, 423, and 429 each coordinate Zn(2+). The BRCT domain occupies 593-674; sequence KPAQTLEGIT…FTRLLETGEA (82 aa).

This sequence belongs to the NAD-dependent DNA ligase family. LigA subfamily. Mg(2+) is required as a cofactor. It depends on Mn(2+) as a cofactor.

The enzyme catalyses NAD(+) + (deoxyribonucleotide)n-3'-hydroxyl + 5'-phospho-(deoxyribonucleotide)m = (deoxyribonucleotide)n+m + AMP + beta-nicotinamide D-nucleotide.. DNA ligase that catalyzes the formation of phosphodiester linkages between 5'-phosphoryl and 3'-hydroxyl groups in double-stranded DNA using NAD as a coenzyme and as the energy source for the reaction. It is essential for DNA replication and repair of damaged DNA. The polypeptide is DNA ligase (Corynebacterium aurimucosum (strain ATCC 700975 / DSM 44827 / CIP 107346 / CN-1) (Corynebacterium nigricans)).